The chain runs to 715 residues: Putative macrophage stimulating 1-like protein (715 aa).

The signal sequence occupies residues 1–20 (MAPAPVTLLAPGAASSMSCS). One can recognise a PAN domain in the interval 21-110 (QPGQRSPSND…GRCDLFQEKG (90 aa)). 4 consecutive Kringle domains span residues 63–156 (GRCG…IKSC), 160–238 (ACVW…LPRC), 252–345 (SCFR…IRRC), and 353–464 (DCYH…LRRC). Disulfide bonds link Cys-127–Cys-151, Cys-161–Cys-238, Cys-182–Cys-221, Cys-210–Cys-233, Cys-253–Cys-345, Cys-316–Cys-339, Cys-354–Cys-464, Cys-375–Cys-447, Cys-511–Cys-527, Cys-606–Cys-671, Cys-636–Cys-650, and Cys-661–Cys-689. In terms of domain architecture, Peptidase S1 spans 488-713 (VAGGHPGNSP…FVDWIHKVMR (226 aa)).

Belongs to the peptidase S1 family. Plasminogen subfamily.

It is found in the secreted. This Homo sapiens (Human) protein is Putative macrophage stimulating 1-like protein (MST1L).